A 495-amino-acid polypeptide reads, in one-letter code: Ubiquinone biosynthesis monooxygenase COQ6, mitochondrial (495 aa).

The protein belongs to the UbiH/COQ6 family. Component of a multi-subunit COQ enzyme complex. It depends on FAD as a cofactor.

Its subcellular location is the mitochondrion inner membrane. It catalyses the reaction a 4-hydroxy-3-(all-trans-polyprenyl)benzoate + 2 reduced [2Fe-2S]-[ferredoxin] + O2 + 2 H(+) = a 3,4-dihydroxy-5-(all-trans-polyprenyl)benzoate + 2 oxidized [2Fe-2S]-[ferredoxin] + H2O. The catalysed reaction is a 2-methoxy-6-(all-trans-polyprenyl)phenol + 2 reduced [2Fe-2S]-[ferredoxin] + O2 + 2 H(+) = a 2-methoxy-6-(all-trans-polyprenyl)benzene-1,4-diol + 2 oxidized [2Fe-2S]-[ferredoxin] + H2O. The protein operates within cofactor biosynthesis; ubiquinone biosynthesis. Functionally, FAD-dependent monooxygenase required for two non-consecutive steps during ubiquinone biosynthesis. Required for the C5-ring hydroxylation during ubiquinone biosynthesis by catalyzing the hydroxylation of 4-hydroxy-3-(all-trans-polyprenyl)benzoic acid to 3,4-dihydroxy-5-(all-trans-polyprenyl)benzoic acid. Also acts downstream of coq4, for the C1-hydroxylation during ubiquinone biosynthesis by catalyzing the hydroxylation of 2-methoxy-6-(all-trans-polyprenyl)phenol to 2-methoxy-6-(all-trans-polyprenyl)benzene-1,4-diol. The electrons required for the hydroxylation reaction are funneled indirectly to coq6 from NADPH via a ferredoxin/ferredoxin reductase system. In Dictyostelium discoideum (Social amoeba), this protein is Ubiquinone biosynthesis monooxygenase COQ6, mitochondrial.